Reading from the N-terminus, the 261-residue chain is Glucosamine-6-phosphate deaminase (261 aa).

The Proton acceptor; for enolization step role is filled by Asp-67. The active-site For ring-opening step is the Asp-136. His-138 functions as the Proton acceptor; for ring-opening step in the catalytic mechanism. The active-site For ring-opening step is the Glu-143.

The protein belongs to the glucosamine/galactosamine-6-phosphate isomerase family. NagB subfamily.

It carries out the reaction alpha-D-glucosamine 6-phosphate + H2O = beta-D-fructose 6-phosphate + NH4(+). The protein operates within amino-sugar metabolism; N-acetylneuraminate degradation; D-fructose 6-phosphate from N-acetylneuraminate: step 5/5. Functionally, catalyzes the reversible isomerization-deamination of glucosamine 6-phosphate (GlcN6P) to form fructose 6-phosphate (Fru6P) and ammonium ion. The sequence is that of Glucosamine-6-phosphate deaminase from Streptomyces avermitilis (strain ATCC 31267 / DSM 46492 / JCM 5070 / NBRC 14893 / NCIMB 12804 / NRRL 8165 / MA-4680).